The sequence spans 292 residues: 4-hydroxy-tetrahydrodipicolinate synthase (292 aa).

Residue Thr-45 participates in pyruvate binding. The Proton donor/acceptor role is filled by Tyr-133. The active-site Schiff-base intermediate with substrate is Lys-161. Ile-203 is a binding site for pyruvate.

Belongs to the DapA family. Homotetramer; dimer of dimers.

It localises to the cytoplasm. The catalysed reaction is L-aspartate 4-semialdehyde + pyruvate = (2S,4S)-4-hydroxy-2,3,4,5-tetrahydrodipicolinate + H2O + H(+). It functions in the pathway amino-acid biosynthesis; L-lysine biosynthesis via DAP pathway; (S)-tetrahydrodipicolinate from L-aspartate: step 3/4. In terms of biological role, catalyzes the condensation of (S)-aspartate-beta-semialdehyde [(S)-ASA] and pyruvate to 4-hydroxy-tetrahydrodipicolinate (HTPA). In Nitrosococcus oceani (strain ATCC 19707 / BCRC 17464 / JCM 30415 / NCIMB 11848 / C-107), this protein is 4-hydroxy-tetrahydrodipicolinate synthase.